We begin with the raw amino-acid sequence, 124 residues long: Small ribosomal subunit protein uS12 (124 aa).

Asp-89 bears the 3-methylthioaspartic acid mark. A disordered region spans residues 104-124 (SAGVQNRNRGRSKYGTKRPKK). Basic residues predominate over residues 111-124 (NRGRSKYGTKRPKK).

This sequence belongs to the universal ribosomal protein uS12 family. Part of the 30S ribosomal subunit. Contacts proteins S8 and S17. May interact with IF1 in the 30S initiation complex.

In terms of biological role, with S4 and S5 plays an important role in translational accuracy. Interacts with and stabilizes bases of the 16S rRNA that are involved in tRNA selection in the A site and with the mRNA backbone. Located at the interface of the 30S and 50S subunits, it traverses the body of the 30S subunit contacting proteins on the other side and probably holding the rRNA structure together. The combined cluster of proteins S8, S12 and S17 appears to hold together the shoulder and platform of the 30S subunit. The protein is Small ribosomal subunit protein uS12 of Desulforamulus reducens (strain ATCC BAA-1160 / DSM 100696 / MI-1) (Desulfotomaculum reducens).